A 374-amino-acid polypeptide reads, in one-letter code: Ribosomal RNA large subunit methyltransferase G (374 aa).

Belongs to the methyltransferase superfamily. RlmG family.

It localises to the cytoplasm. The enzyme catalyses guanosine(1835) in 23S rRNA + S-adenosyl-L-methionine = N(2)-methylguanosine(1835) in 23S rRNA + S-adenosyl-L-homocysteine + H(+). Its function is as follows. Specifically methylates the guanine in position 1835 (m2G1835) of 23S rRNA. The sequence is that of Ribosomal RNA large subunit methyltransferase G from Pseudomonas syringae pv. syringae (strain B728a).